The primary structure comprises 304 residues: Non-specific ribonucleoside hydrolase RihC (304 aa).

Residue His-233 is part of the active site.

This sequence belongs to the IUNH family. RihC subfamily.

In terms of biological role, hydrolyzes both purine and pyrimidine ribonucleosides with a broad-substrate specificity. The polypeptide is Non-specific ribonucleoside hydrolase RihC (Shigella sonnei (strain Ss046)).